A 190-amino-acid polypeptide reads, in one-letter code: Shikimate kinase (190 aa).

13–18 contacts ATP; it reads GSGKTT. Position 17 (threonine 17) interacts with Mg(2+). Aspartate 35, arginine 59, and glycine 81 together coordinate substrate. Arginine 119 is a binding site for ATP. Residue arginine 138 coordinates substrate. Glutamine 155 provides a ligand contact to ATP.

Belongs to the shikimate kinase family. Monomer. Requires Mg(2+) as cofactor.

It localises to the cytoplasm. It catalyses the reaction shikimate + ATP = 3-phosphoshikimate + ADP + H(+). The protein operates within metabolic intermediate biosynthesis; chorismate biosynthesis; chorismate from D-erythrose 4-phosphate and phosphoenolpyruvate: step 5/7. In terms of biological role, catalyzes the specific phosphorylation of the 3-hydroxyl group of shikimic acid using ATP as a cosubstrate. The chain is Shikimate kinase from Nitrosococcus oceani (strain ATCC 19707 / BCRC 17464 / JCM 30415 / NCIMB 11848 / C-107).